The sequence spans 327 residues: Tagatose 1,6-diphosphate aldolase 2 (327 aa).

This sequence belongs to the aldolase LacD family.

The catalysed reaction is D-tagatofuranose 1,6-bisphosphate = D-glyceraldehyde 3-phosphate + dihydroxyacetone phosphate. Its pathway is carbohydrate metabolism; D-tagatose 6-phosphate degradation; D-glyceraldehyde 3-phosphate and glycerone phosphate from D-tagatose 6-phosphate: step 2/2. This is Tagatose 1,6-diphosphate aldolase 2 (lacD2) from Streptococcus pyogenes serotype M1.